We begin with the raw amino-acid sequence, 202 residues long: Probable nicotinate-nucleotide adenylyltransferase (202 aa).

The protein belongs to the NadD family.

The enzyme catalyses nicotinate beta-D-ribonucleotide + ATP + H(+) = deamido-NAD(+) + diphosphate. It participates in cofactor biosynthesis; NAD(+) biosynthesis; deamido-NAD(+) from nicotinate D-ribonucleotide: step 1/1. Catalyzes the reversible adenylation of nicotinate mononucleotide (NaMN) to nicotinic acid adenine dinucleotide (NaAD). This is Probable nicotinate-nucleotide adenylyltransferase from Synechococcus sp. (strain JA-2-3B'a(2-13)) (Cyanobacteria bacterium Yellowstone B-Prime).